Here is a 252-residue protein sequence, read N- to C-terminus: 5-oxoprolinase subunit A (252 aa).

It belongs to the LamB/PxpA family. Forms a complex composed of PxpA, PxpB and PxpC.

The enzyme catalyses 5-oxo-L-proline + ATP + 2 H2O = L-glutamate + ADP + phosphate + H(+). Catalyzes the cleavage of 5-oxoproline to form L-glutamate coupled to the hydrolysis of ATP to ADP and inorganic phosphate. This chain is 5-oxoprolinase subunit A, found in Corynebacterium glutamicum (strain R).